A 525-amino-acid polypeptide reads, in one-letter code: NAD(P)H-quinone oxidoreductase chain 4 1 (525 aa).

Transmembrane regions (helical) follow at residues 6–26 (FPWL…IPII), 36–56 (WYAL…FYTS), 91–111 (LIIL…PVTL), 115–135 (LFYF…AVQD), 136–156 (LLLF…LLAI), 169–189 (FILY…TMAF), 212–232 (LLLY…IPLH), 243–263 (TAPA…YALI), 277–297 (FAPV…LTSF), 314–334 (MGFV…GAVL), 335–355 (QMVS…ATYD), 375–397 (IFAM…GFVA), 417–437 (VIVV…LLSM), and 464–484 (VFVI…PKLL).

It belongs to the complex I subunit 4 family.

The protein localises to the cellular thylakoid membrane. It carries out the reaction a plastoquinone + NADH + (n+1) H(+)(in) = a plastoquinol + NAD(+) + n H(+)(out). The catalysed reaction is a plastoquinone + NADPH + (n+1) H(+)(in) = a plastoquinol + NADP(+) + n H(+)(out). NDH-1 shuttles electrons from NAD(P)H, via FMN and iron-sulfur (Fe-S) centers, to quinones in the respiratory chain. The immediate electron acceptor for the enzyme in this species is believed to be plastoquinone. Couples the redox reaction to proton translocation (for every two electrons transferred, four hydrogen ions are translocated across the cytoplasmic membrane), and thus conserves the redox energy in a proton gradient. The protein is NAD(P)H-quinone oxidoreductase chain 4 1 of Trichormus variabilis (strain ATCC 29413 / PCC 7937) (Anabaena variabilis).